The following is a 362-amino-acid chain: Endopolygalacturonase II (362 aa).

The N-terminal stretch at 1–21 (MHSFASLLAYGLVAGATFASA) is a signal peptide. Positions 22–27 (SPIEAR) are excised as a propeptide. A disulfide bridge links C30 with C45. Residues 156–186 (ANDITFTDVTINNADGDTQGGHNTDAFDVGN) form a PbH1 1 repeat. The active-site Proton donor is D201. C203 and C219 are joined by a disulfide. 4 PbH1 repeats span residues 209-229 (GENI…SIGS), 238-259 (VKNV…RIKT), 267-289 (VSEI…VIQQ), and 301-322 (TNGV…DSGA). H223 is a catalytic residue. An N-linked (GlcNAc...) (high mannose) asparagine glycan is attached at N240. 2 disulfide bridges follow: C329/C334 and C353/C362.

This sequence belongs to the glycosyl hydrolase 28 family.

It is found in the secreted. The catalysed reaction is (1,4-alpha-D-galacturonosyl)n+m + H2O = (1,4-alpha-D-galacturonosyl)n + (1,4-alpha-D-galacturonosyl)m.. In terms of biological role, involved in maceration and soft-rotting of plant tissue. Hydrolyzes the 1,4-alpha glycosidic bonds of de-esterified pectate in the smooth region of the plant cell wall. The sequence is that of Endopolygalacturonase II (pgaII) from Aspergillus niger (strain ATCC 1015 / CBS 113.46 / FGSC A1144 / LSHB Ac4 / NCTC 3858a / NRRL 328 / USDA 3528.7).